We begin with the raw amino-acid sequence, 490 residues long: Probable cytosol aminopeptidase (490 aa).

Lys255 and Asp260 together coordinate Mn(2+). Lys267 is a catalytic residue. Mn(2+)-binding residues include Asp278, Asp337, and Glu339. The active site involves Arg341.

Belongs to the peptidase M17 family. The cofactor is Mn(2+).

It is found in the cytoplasm. It carries out the reaction Release of an N-terminal amino acid, Xaa-|-Yaa-, in which Xaa is preferably Leu, but may be other amino acids including Pro although not Arg or Lys, and Yaa may be Pro. Amino acid amides and methyl esters are also readily hydrolyzed, but rates on arylamides are exceedingly low.. The catalysed reaction is Release of an N-terminal amino acid, preferentially leucine, but not glutamic or aspartic acids.. Presumably involved in the processing and regular turnover of intracellular proteins. Catalyzes the removal of unsubstituted N-terminal amino acids from various peptides. The protein is Probable cytosol aminopeptidase of Gluconobacter oxydans (strain 621H) (Gluconobacter suboxydans).